A 37-amino-acid chain; its full sequence is Large ribosomal subunit protein bL36 (37 aa).

The protein belongs to the bacterial ribosomal protein bL36 family.

The polypeptide is Large ribosomal subunit protein bL36 (Leptospira interrogans serogroup Icterohaemorrhagiae serovar copenhageni (strain Fiocruz L1-130)).